The following is a 282-amino-acid chain: ATP phosphoribosyltransferase (282 aa).

This sequence belongs to the ATP phosphoribosyltransferase family. Long subfamily. It depends on Mg(2+) as a cofactor.

The protein resides in the cytoplasm. It carries out the reaction 1-(5-phospho-beta-D-ribosyl)-ATP + diphosphate = 5-phospho-alpha-D-ribose 1-diphosphate + ATP. It participates in amino-acid biosynthesis; L-histidine biosynthesis; L-histidine from 5-phospho-alpha-D-ribose 1-diphosphate: step 1/9. Feedback inhibited by histidine. Functionally, catalyzes the condensation of ATP and 5-phosphoribose 1-diphosphate to form N'-(5'-phosphoribosyl)-ATP (PR-ATP). Has a crucial role in the pathway because the rate of histidine biosynthesis seems to be controlled primarily by regulation of HisG enzymatic activity. This is ATP phosphoribosyltransferase from Micrococcus luteus (strain ATCC 4698 / DSM 20030 / JCM 1464 / CCM 169 / CCUG 5858 / IAM 1056 / NBRC 3333 / NCIMB 9278 / NCTC 2665 / VKM Ac-2230) (Micrococcus lysodeikticus).